A 471-amino-acid polypeptide reads, in one-letter code: Eukaryotic translation initiation factor 3 subunit M (471 aa).

The tract at residues 39–61 (EISSLLEPLRQQEQSEEEPDRKQ) is disordered. The PCI domain maps to 206-377 (DFELAQSHVV…SEFLVHRATY (172 aa)). Residues 419–471 (QAATEEANQGKSGEKGGKGGDRRRNPQHQQQQQQSQPSQPQQPRETELVAGAE) are disordered. Residues 430–442 (SGEKGGKGGDRRR) show a composition bias toward basic and acidic residues. Low complexity predominate over residues 445–461 (QHQQQQQQSQPSQPQQP).

This sequence belongs to the eIF-3 subunit M family. In terms of assembly, component of the eukaryotic translation initiation factor 3 (eIF-3) complex.

Its subcellular location is the cytoplasm. Its function is as follows. Component of the eukaryotic translation initiation factor 3 (eIF-3) complex, which is involved in protein synthesis of a specialized repertoire of mRNAs and, together with other initiation factors, stimulates binding of mRNA and methionyl-tRNAi to the 40S ribosome. The eIF-3 complex specifically targets and initiates translation of a subset of mRNAs involved in cell proliferation. This is Eukaryotic translation initiation factor 3 subunit M from Aspergillus clavatus (strain ATCC 1007 / CBS 513.65 / DSM 816 / NCTC 3887 / NRRL 1 / QM 1276 / 107).